The following is a 265-amino-acid chain: Mlc titration factor A (265 aa).

4 residues coordinate Zn(2+): His111, His148, His152, and Glu211.

It belongs to the MtfA family. As to quaternary structure, interacts with Mlc. Zn(2+) is required as a cofactor.

Its subcellular location is the cytoplasm. Functionally, involved in the modulation of the activity of the glucose-phosphotransferase system (glucose-PTS). Interacts with the transcriptional repressor Mlc, preventing its interaction with DNA and leading to the modulation of expression of genes regulated by Mlc, including ptsG, which encodes the PTS system glucose-specific EIICB component. In terms of biological role, shows zinc-dependent metallopeptidase activity. The chain is Mlc titration factor A from Escherichia coli O7:K1 (strain IAI39 / ExPEC).